A 213-amino-acid polypeptide reads, in one-letter code: Thymidylate kinase (213 aa).

10 to 17 is an ATP binding site; sequence GLEGAGKT.

The protein belongs to the thymidylate kinase family.

It catalyses the reaction dTMP + ATP = dTDP + ADP. In terms of biological role, phosphorylation of dTMP to form dTDP in both de novo and salvage pathways of dTTP synthesis. The chain is Thymidylate kinase from Klebsiella pneumoniae subsp. pneumoniae (strain ATCC 700721 / MGH 78578).